Consider the following 400-residue polypeptide: Zinc finger CCHC domain-containing protein 3 (400 aa).

The tract at residues 1-157 (MATGGGAEEE…LQDEPPAAGP (157 aa)) is disordered. 2 stretches are compositionally biased toward basic and acidic residues: residues 26 to 38 (ARVE…REKM) and 47 to 63 (LAEK…RDET). Over residues 66-75 (GASGGLGSPG) the composition is skewed to gly residues. The span at 91 to 109 (GDPKGRRRDPTGEASDAYR) shows a compositional bias: basic and acidic residues. Residue Tyr198 is modified to Phosphotyrosine. 2 consecutive CCHC-type zinc fingers follow at residues 349-365 (RCFR…YCRK) and 369-384 (CNLC…QCPK).

In terms of assembly, interacts with CGAS. Interacts with RIGI. Interacts with IFIH1/MDA5.

It is found in the cytoplasm. Functionally, nucleic acid-binding protein involved in innate immune response to DNA and RNA viruses. Binds DNA and RNA in the cytoplasm and acts by promoting recognition of viral nucleic acids by virus sensors, such as RIGI, IFIH1/MDA5 and CGAS. Acts as a co-sensor for recognition of double-stranded DNA (dsDNA) by cGAS in the cytoplasm, thereby playing a role in innate immune response to cytosolic dsDNA and DNA virus. Binds dsDNA and probably acts by promoting sensing of dsDNA by CGAS, leading to enhance CGAS oligomerization and activation. Promotes sensing of viral RNA by RIG-I-like receptors proteins RIGI and IFIH1/MDA5 via two mechanisms: binds double-stranded RNA (dsRNA), enhancing the binding of RIGI and IFIH1/MDA5 to dsRNA and promotes 'Lys-63'-linked ubiquitination and subsequent activation of RIGI and IFIH1/MDA5. This Mus musculus (Mouse) protein is Zinc finger CCHC domain-containing protein 3.